Reading from the N-terminus, the 177-residue chain is PBAN-type neuropeptides (177 aa).

The N-terminal stretch at 1-23 (MIVTGNPVCAIALLLCLVFRASG) is a signal peptide. Positions 24-54 (EYELEMSSGGSNDGRSPSNDFGSCTDGKCTK) are excised as a propeptide. A disordered region spans residues 28–73 (EMSSGGSNDGRSPSNDFGSCTDGKCTKRTTTTQESGISSGMWFGPR). The span at 31-45 (SGGSNDGRSPSNDFG) shows a compositional bias: polar residues. A compositionally biased stretch (low complexity) spans 47-59 (CTDGKCTKRTTTT). Residue Leu74 is modified to Leucine amide. Positions 78 to 113 (HKSNEKQQINPEIEMLVNALDQPGMRWTVITIPANE) are excised as a propeptide. A leucine amide mark is found at Leu124, Leu154, and Leu166. Positions 169-177 (QSRSVSRKI) are excised as a propeptide.

The protein belongs to the pyrokinin family. Pyrokinins (PK) 1 to 4 are expressed in the retrocerebral complex. PK 1 is expressed in central brain, anntennal lobes and abominal ganglia. PK 2 is expressed in optical lobes and in gnathal, thoracic and abdominal ganglia. PK 3 is expressed in optical lobes and in thoracic and abdominal ganglia (at protein level).

It localises to the secreted. Its function is as follows. Pyrokinins mediate visceral muscle contractile activity (myotropic activity). The protein is PBAN-type neuropeptides of Camponotus floridanus (Florida carpenter ant).